An 848-amino-acid chain; its full sequence is ATP-dependent Clp protease ATP-binding subunit ClpC1 (848 aa).

Residues 2 to 144 (FERFTDRARK…RQQVIQLLSG (143 aa)) enclose the Clp R domain. Repeat stretches follow at residues 5–70 (FTDR…IGQG) and 80–144 (FTPR…LLSG). The tract at residues 171-418 (LDQFGRNLTA…RMRIRRMTAP (248 aa)) is i. Position 216–223 (216–223 (GEPGVGKT)) interacts with ATP. The 36-residue stretch at 425–460 (DEKIAEARREKESAIDAQDFEKAASLRDREKTLVAQ) folds into the UVR domain. An II region spans residues 479–670 (VDDEQIAEVL…VLIFTSNLGT (192 aa)). Residue 553–560 (GPSGVGKT) participates in ATP binding. The tract at residues 821–848 (TGTRKPPAEPDLAKAGAHSAGGPEPAAR) is disordered.

This sequence belongs to the ClpA/ClpB family. ClpC subfamily.

ATP-dependent specificity component of the Clp protease. It directs the protease to specific substrates. Can perform chaperone functions in the absence of ClpP. The protein is ATP-dependent Clp protease ATP-binding subunit ClpC1 (clpC1) of Mycobacterium tuberculosis (strain CDC 1551 / Oshkosh).